A 468-amino-acid polypeptide reads, in one-letter code: Chromatin assembly factor 1 subunit B (468 aa).

5 WD repeats span residues 11–52 (HDSQ…NGQN), 69–108 (HHEQAINVIRFNSKGDVLASAGDDGQVLLWKQEDPNTQQE), 143–182 (TAAAEIYDLAWSPDNRNIVVACMDNSIRLFDVGAGMLVCG), 185–224 (DHGHYVQGVAWDPLNQFILSQSADRSLHVYGVILSSAGVV), and 371–413 (IHYS…SRIE).

The protein belongs to the WD repeat HIR1 family. As to quaternary structure, component of chromatin assembly factor 1 (CAF-1), composed of MSI1/p50, CAC2/p60 and CAC1/p90. Interacts with RTT106.

It is found in the nucleus. Functionally, acts as a component of the histone chaperone complex chromatin assembly factor 1 (CAF-1), which assembles histone octamers onto replicating DNA. It performs the first step of the nucleosome assembly process, bringing newly synthesized histones H3 and H4 to replicating DNA; histones H2A/H2B can bind to this chromatin precursor subsequent to DNA replication to complete the histone octamer. Plays a role in the maintenance of heterochromatin. The chain is Chromatin assembly factor 1 subunit B (CAC2) from Saccharomyces cerevisiae (strain ATCC 204508 / S288c) (Baker's yeast).